We begin with the raw amino-acid sequence, 306 residues long: Pantothenate kinase (306 aa).

91–98 (GSVAVGKS) is a binding site for ATP.

The protein belongs to the prokaryotic pantothenate kinase family.

The protein localises to the cytoplasm. It catalyses the reaction (R)-pantothenate + ATP = (R)-4'-phosphopantothenate + ADP + H(+). It participates in cofactor biosynthesis; coenzyme A biosynthesis; CoA from (R)-pantothenate: step 1/5. The chain is Pantothenate kinase from Streptococcus gordonii (strain Challis / ATCC 35105 / BCRC 15272 / CH1 / DL1 / V288).